Reading from the N-terminus, the 403-residue chain is Formate-dependent phosphoribosylglycinamide formyltransferase (403 aa).

Residues 27 to 28 and glutamate 87 each bind N(1)-(5-phospho-beta-D-ribosyl)glycinamide; that span reads EL. ATP is bound by residues arginine 120, lysine 161, 166–171, 201–204, and glutamate 209; these read SSGKGQ and EGFV. Residues 125 to 319 enclose the ATP-grasp domain; that stretch reads RLAAEELGLP…EFELHARAIL (195 aa). Residues glutamate 278 and glutamate 290 each coordinate Mg(2+). Residues aspartate 297, lysine 366, and 373–374 each bind N(1)-(5-phospho-beta-D-ribosyl)glycinamide; that span reads RR. Residues 382 to 403 form a disordered region; that stretch reads GPDVETARSRAREAASRVEPVA. Residues 386-397 are compositionally biased toward basic and acidic residues; sequence ETARSRAREAAS.

Belongs to the PurK/PurT family. In terms of assembly, homodimer.

The enzyme catalyses N(1)-(5-phospho-beta-D-ribosyl)glycinamide + formate + ATP = N(2)-formyl-N(1)-(5-phospho-beta-D-ribosyl)glycinamide + ADP + phosphate + H(+). Its pathway is purine metabolism; IMP biosynthesis via de novo pathway; N(2)-formyl-N(1)-(5-phospho-D-ribosyl)glycinamide from N(1)-(5-phospho-D-ribosyl)glycinamide (formate route): step 1/1. Its function is as follows. Involved in the de novo purine biosynthesis. Catalyzes the transfer of formate to 5-phospho-ribosyl-glycinamide (GAR), producing 5-phospho-ribosyl-N-formylglycinamide (FGAR). Formate is provided by PurU via hydrolysis of 10-formyl-tetrahydrofolate. This is Formate-dependent phosphoribosylglycinamide formyltransferase from Rhodococcus jostii (strain RHA1).